Here is a 330-residue protein sequence, read N- to C-terminus: Ribosomal RNA small subunit methyltransferase C (330 aa).

It belongs to the methyltransferase superfamily. RsmC family. In terms of assembly, monomer.

It localises to the cytoplasm. The enzyme catalyses guanosine(1207) in 16S rRNA + S-adenosyl-L-methionine = N(2)-methylguanosine(1207) in 16S rRNA + S-adenosyl-L-homocysteine + H(+). In terms of biological role, specifically methylates the guanine in position 1207 of 16S rRNA in the 30S particle. The polypeptide is Ribosomal RNA small subunit methyltransferase C (Haemophilus influenzae (strain PittGG)).